The following is a 217-amino-acid chain: Homeobox protein Hox-B7 (217 aa).

Positions 126-131 (IYPWMR) match the Antp-type hexapeptide motif. A DNA-binding region (homeobox) is located at residues 137 to 196 (RKRGRQTYTRYQTLELEKEFHYNRYLTRRRRIEIAHTLCLTERQIKIWFQNRRMKWKKEN). The segment at 192 to 217 (WKKENKTSGPGTTGQDKAEAEEEEEE) is disordered.

The protein belongs to the Antp homeobox family. In terms of assembly, forms a DNA-binding heterodimer with transcription factor PBX1.

The protein resides in the nucleus. Sequence-specific transcription factor which is part of a developmental regulatory system that provides cells with specific positional identities on the anterior-posterior axis. The protein is Homeobox protein Hox-B7 (Hoxb7) of Mus musculus (Mouse).